A 287-amino-acid chain; its full sequence is MAIRKFKPYTPGTRQRVVTDFSEITGSKPERSLIVSKHRNKGRNNRGVITCRHRGGGHKRQYRLVDFRRDKRNINAKVAAIHYDPHRNARLALLFYEDGEKRYIIAPAGIKVGQNVISGDSVPIEDGNAMPLSVMPLGSSVHCVELYAGRGAQMVRSAGASAQLMAKEGDYVALKLPSTEVRLVRKECYATLGEVGNAEIRNTSLGKAGRTRWLGRRPQVRGSVMNPCDHPHGGGEGKAPIGRAGPVTPWGKAALGLKTRKKNKPSNNLVVRRRRRISKRSRGGRDS.

The tract at residues 220–287 (VRGSVMNPCD…SKRSRGGRDS (68 aa)) is disordered. Residues 271-287 (VRRRRRISKRSRGGRDS) are compositionally biased toward basic residues.

It belongs to the universal ribosomal protein uL2 family. As to quaternary structure, part of the 50S ribosomal subunit. Forms a bridge to the 30S subunit in the 70S ribosome.

Its function is as follows. One of the primary rRNA binding proteins. Required for association of the 30S and 50S subunits to form the 70S ribosome, for tRNA binding and peptide bond formation. It has been suggested to have peptidyltransferase activity; this is somewhat controversial. Makes several contacts with the 16S rRNA in the 70S ribosome. The protein is Large ribosomal subunit protein uL2 of Prochlorococcus marinus (strain MIT 9515).